The chain runs to 295 residues: Phosphoribosylaminoimidazole-succinocarboxamide synthase (295 aa).

Belongs to the SAICAR synthetase family.

It carries out the reaction 5-amino-1-(5-phospho-D-ribosyl)imidazole-4-carboxylate + L-aspartate + ATP = (2S)-2-[5-amino-1-(5-phospho-beta-D-ribosyl)imidazole-4-carboxamido]succinate + ADP + phosphate + 2 H(+). It functions in the pathway purine metabolism; IMP biosynthesis via de novo pathway; 5-amino-1-(5-phospho-D-ribosyl)imidazole-4-carboxamide from 5-amino-1-(5-phospho-D-ribosyl)imidazole-4-carboxylate: step 1/2. This is Phosphoribosylaminoimidazole-succinocarboxamide synthase from Nitrosomonas europaea (strain ATCC 19718 / CIP 103999 / KCTC 2705 / NBRC 14298).